A 322-amino-acid polypeptide reads, in one-letter code: AB hydrolase superfamily protein FGSG_00044 (322 aa).

Residues Arg36–Lys319 enclose the AB hydrolase-1 domain.

It belongs to the AB hydrolase superfamily.

It functions in the pathway mycotoxin biosynthesis. Its function is as follows. AB hydrolase superfamily protein; part of the gene cluster that mediates the biosynthesis of gramillins A and B, bicyclic lipopeptides that induce cell death in maize leaves but not in wheat leaves. The nonribosomal peptide synthetase GRA1 incorporates respectively a glutamic adic (Glu), a leucine (Leu), a serine (Ser), a hydroxyglutamine (HOGln), a 2-amino decanoic acid, and 2 cysteins (CysB and CysA). The biosynthesis of 2-amino decanoic acid incorporated in gramillins could be initiated by a fatty acid synthase composed of the alpha and beta subunits FGSG_00036 and FGSG_11656. The cytochrome P450 monooxygenase FGSG_15680 could hydroxylate the fatty acid chain. Subsequent oxidation to the ketone by the oxidoreductase FGSG_00048 and transamination by aminotransferase FGSG_00049 could form 2-amino-decanoic acid. On the other hand, FGSG_15680 could also be responsible for the HO-modified glutamine at the gamma-position. Whether hydroxylation occurs on the fully assembled product or on the Gln residue prior to assembly into the gramillins requires further proof. The thioredoxin FGSG_00043 could also be required for the disulfide-bond formation between CysA and CysB. The specific involvement of the remaining proteins from the cluster is more difficult to discern, but could have broader regulatory (FGSG_00040 and FGSG_11657) or enzymatic functions (FGSG_00044 and FGSG_00045). The final C-domain of GRA1 does not possess the expected sequence of a termination CT domain, often implicated in macrocyclization and release of a cyclopeptidein fungal NRPs; and the thioesterase FGSG_00047 may act in concert with the terminal C-domain of GRA1 to catalyze the formation of the macrocyclic anhydride and release of the products. This is AB hydrolase superfamily protein FGSG_00044 from Gibberella zeae (strain ATCC MYA-4620 / CBS 123657 / FGSC 9075 / NRRL 31084 / PH-1) (Wheat head blight fungus).